Consider the following 289-residue polypeptide: MKLIILDHYSQASEWAAKYIRNRIIQFNPGPDKYFTLGLPTGSTPLGCYKKLIEYYKNGDLSFKYVKTFNMDEYVGLPRDHPESYHSFMWNNFFKHIDIHPENTHILDGNAADLQAECDAFEEKIKAAGGIELFVGGIGPDGHIAFNEPGSSLVSRTRVKTLAMDTILANARFFDGDLAKVPTMALTVGVGTVMDAREVMILITGAHKAFALYKAIEEGVNHMWTVSAFQQHPRTVFVCDEDATLELKVKTVKYFKGLMLVHNKLVDPLYSIKEKEIEKSQSSKKPYSD.

An N6-acetyllysine modification is found at Lys64. The Proton acceptor; for enolization step role is filled by Asp72. Asp141 functions as the For ring-opening step in the catalytic mechanism. The active-site Proton acceptor; for ring-opening step is His143. The active-site For ring-opening step is the Glu148. Phosphothreonine is present on Thr161.

It belongs to the glucosamine/galactosamine-6-phosphate isomerase family. In terms of assembly, homohexamer.

Its subcellular location is the cytoplasm. It catalyses the reaction alpha-D-glucosamine 6-phosphate + H2O = beta-D-fructose 6-phosphate + NH4(+). The protein operates within nucleotide-sugar biosynthesis; UDP-N-acetyl-alpha-D-glucosamine biosynthesis; alpha-D-glucosamine 6-phosphate from D-fructose 6-phosphate: step 1/1. Its activity is regulated as follows. Allosterically activated by N-acetylglucosamine-6-phosphate (GlcNAc6P). In terms of biological role, catalyzes the reversible conversion of alpha-D-glucosamine 6-phosphate (GlcN-6P) into beta-D-fructose 6-phosphate (Fru-6P) and ammonium ion, a regulatory reaction step in de novo uridine diphosphate-N-acetyl-alpha-D-glucosamine (UDP-GlcNAc) biosynthesis via hexosamine pathway. Deamination is coupled to aldo-keto isomerization mediating the metabolic flux from UDP-GlcNAc toward Fru-6P. At high ammonium level can drive amination and isomerization of Fru-6P toward hexosamines and UDP-GlcNAc synthesis. Has a role in fine tuning the metabolic fluctuations of cytosolic UDP-GlcNAc and their effects on hyaluronan synthesis that occur during tissue remodeling. Seems to trigger calcium oscillations in mammalian eggs. These oscillations serve as the essential trigger for egg activation and early development of the embryo. This Bos taurus (Bovine) protein is Glucosamine-6-phosphate deaminase 1.